Consider the following 581-residue polypeptide: Arginine--tRNA ligase (581 aa).

The short motif at 126–136 (PNLAKEMHVGH) is the 'HIGH' region element.

The protein belongs to the class-I aminoacyl-tRNA synthetase family. Monomer.

The protein localises to the cytoplasm. It catalyses the reaction tRNA(Arg) + L-arginine + ATP = L-arginyl-tRNA(Arg) + AMP + diphosphate. In Shewanella woodyi (strain ATCC 51908 / MS32), this protein is Arginine--tRNA ligase.